The chain runs to 148 residues: Deoxyuridine 5'-triphosphate nucleotidohydrolase (148 aa).

Substrate is bound by residues 67–69 (RSG), Asn80, 84–86 (LID), and Met94.

It belongs to the dUTPase family. The cofactor is Mg(2+).

The catalysed reaction is dUTP + H2O = dUMP + diphosphate + H(+). Its pathway is pyrimidine metabolism; dUMP biosynthesis; dUMP from dCTP (dUTP route): step 2/2. Its function is as follows. This enzyme is involved in nucleotide metabolism: it produces dUMP, the immediate precursor of thymidine nucleotides and it decreases the intracellular concentration of dUTP so that uracil cannot be incorporated into DNA. This Burkholderia multivorans (strain ATCC 17616 / 249) protein is Deoxyuridine 5'-triphosphate nucleotidohydrolase.